The following is a 668-amino-acid chain: Transketolase 1 (668 aa).

Residue His26 participates in substrate binding. Thiamine diphosphate is bound by residues His66 and 114–116 (GPL). Asp155 is a binding site for Mg(2+). Thiamine diphosphate-binding residues include Gly156 and Asn185. Residues Asn185 and Ile187 each coordinate Mg(2+). Residues His261, Arg358, and Ser385 each contribute to the substrate site. Position 261 (His261) interacts with thiamine diphosphate. The active-site Proton donor is the Glu413. Position 439 (Phe439) interacts with thiamine diphosphate. Residues His463, Asp471, and Arg522 each contribute to the substrate site.

The protein belongs to the transketolase family. Homodimer. The cofactor is Mg(2+). Ca(2+) serves as cofactor. Requires Mn(2+) as cofactor. It depends on Co(2+) as a cofactor. Thiamine diphosphate is required as a cofactor.

It catalyses the reaction D-sedoheptulose 7-phosphate + D-glyceraldehyde 3-phosphate = aldehydo-D-ribose 5-phosphate + D-xylulose 5-phosphate. Its function is as follows. Catalyzes the transfer of a two-carbon ketol group from a ketose donor to an aldose acceptor, via a covalent intermediate with the cofactor thiamine pyrophosphate. In Pasteurella multocida (strain Pm70), this protein is Transketolase 1 (tktA).